The sequence spans 70 residues: Small ribosomal subunit protein bS21 (70 aa).

The protein belongs to the bacterial ribosomal protein bS21 family.

This is Small ribosomal subunit protein bS21 from Albidiferax ferrireducens (strain ATCC BAA-621 / DSM 15236 / T118) (Rhodoferax ferrireducens).